The chain runs to 157 residues: Crossover junction endodeoxyribonuclease RuvC (157 aa).

Residues aspartate 7, glutamate 66, and aspartate 139 contribute to the active site. Residues aspartate 7, glutamate 66, and aspartate 139 each contribute to the Mg(2+) site.

It belongs to the RuvC family. In terms of assembly, homodimer which binds Holliday junction (HJ) DNA. The HJ becomes 2-fold symmetrical on binding to RuvC with unstacked arms; it has a different conformation from HJ DNA in complex with RuvA. In the full resolvosome a probable DNA-RuvA(4)-RuvB(12)-RuvC(2) complex forms which resolves the HJ. Mg(2+) serves as cofactor.

Its subcellular location is the cytoplasm. It catalyses the reaction Endonucleolytic cleavage at a junction such as a reciprocal single-stranded crossover between two homologous DNA duplexes (Holliday junction).. Its function is as follows. The RuvA-RuvB-RuvC complex processes Holliday junction (HJ) DNA during genetic recombination and DNA repair. Endonuclease that resolves HJ intermediates. Cleaves cruciform DNA by making single-stranded nicks across the HJ at symmetrical positions within the homologous arms, yielding a 5'-phosphate and a 3'-hydroxyl group; requires a central core of homology in the junction. The consensus cleavage sequence is 5'-(A/T)TT(C/G)-3'. Cleavage occurs on the 3'-side of the TT dinucleotide at the point of strand exchange. HJ branch migration catalyzed by RuvA-RuvB allows RuvC to scan DNA until it finds its consensus sequence, where it cleaves and resolves the cruciform DNA. The polypeptide is Crossover junction endodeoxyribonuclease RuvC (Helicobacter pylori (strain J99 / ATCC 700824) (Campylobacter pylori J99)).